The chain runs to 433 residues: Adenosylhomocysteinase A (433 aa).

Residues Thr-57, Asp-132, Glu-157, Lys-187, and Asp-191 each contribute to the substrate site. The NAD binding stretch occupies residues 184 to 351 (SVTKSKFDNL…EGRLVNLGCA (168 aa)).

Belongs to the adenosylhomocysteinase family. In terms of assembly, homotetramer. NAD(+) serves as cofactor.

It is found in the cytoplasm. The catalysed reaction is S-adenosyl-L-homocysteine + H2O = L-homocysteine + adenosine. Its pathway is amino-acid biosynthesis; L-homocysteine biosynthesis; L-homocysteine from S-adenosyl-L-homocysteine: step 1/1. Functionally, catalyzes the hydrolysis of S-adenosyl-L-homocysteine to form adenosine and homocysteine. Binds copper ions. The chain is Adenosylhomocysteinase A (ahcy-a) from Xenopus laevis (African clawed frog).